The primary structure comprises 219 residues: Elongation factor Ts (219 aa).

Residues 81 to 84 (SDFV) form an involved in Mg(2+) ion dislocation from EF-Tu region.

Belongs to the EF-Ts family.

The protein localises to the cytoplasm. Functionally, associates with the EF-Tu.GDP complex and induces the exchange of GDP to GTP. It remains bound to the aminoacyl-tRNA.EF-Tu.GTP complex up to the GTP hydrolysis stage on the ribosome. The protein is Elongation factor Ts of Koribacter versatilis (strain Ellin345).